A 304-amino-acid chain; its full sequence is MDSSSFSFSHLDRLEAESIHILREVVAEFRNPVLLYSVGKDSSVLLHLLLKAFSPAPPPIPLLHVDTRWKFREMITFRDRRVAETGVQLRVHINPEGVAQEINPITHGAAVHTDVMKTQGLRQALEQGQFDAAIGGARRDEEKSRAKERVFSFRNAHHRWDPKNQRPELWNVYNARIHPGESVRVFPLSNWTELDVWLYIYREKIPVVPLYFAAPRPVVERDGMLILVDDERLPLRPGEVSKLLWVRFRTLGCYPLTGAVESRAATLEDIIAEMLLTPFSERQGRLIDYVPGASMESKKIEGYF.

It belongs to the PAPS reductase family. CysD subfamily. In terms of assembly, heterodimer composed of CysD, the smaller subunit, and CysNC.

The catalysed reaction is sulfate + ATP + H(+) = adenosine 5'-phosphosulfate + diphosphate. The protein operates within sulfur metabolism; hydrogen sulfide biosynthesis; sulfite from sulfate: step 1/3. Functionally, with CysN forms the ATP sulfurylase (ATPS) that catalyzes the adenylation of sulfate producing adenosine 5'-phosphosulfate (APS) and diphosphate, the first enzymatic step in sulfur assimilation pathway. APS synthesis involves the formation of a high-energy phosphoric-sulfuric acid anhydride bond driven by GTP hydrolysis by CysN coupled to ATP hydrolysis by CysD. The polypeptide is Sulfate adenylyltransferase subunit 2 (Xylella fastidiosa (strain 9a5c)).